We begin with the raw amino-acid sequence, 577 residues long: Aspartate--tRNA(Asp/Asn) ligase (577 aa).

E171 contacts L-aspartate. The aspartate stretch occupies residues 195–198 (QLFK). R217 provides a ligand contact to L-aspartate. ATP contacts are provided by residues 217 to 219 (RDE) and Q226. H444 is a binding site for L-aspartate. E474 is a binding site for ATP. R481 provides a ligand contact to L-aspartate. An ATP-binding site is contributed by 526–529 (GFDR).

Belongs to the class-II aminoacyl-tRNA synthetase family. Type 1 subfamily. In terms of assembly, homodimer.

The protein localises to the cytoplasm. The catalysed reaction is tRNA(Asx) + L-aspartate + ATP = L-aspartyl-tRNA(Asx) + AMP + diphosphate. Functionally, aspartyl-tRNA synthetase with relaxed tRNA specificity since it is able to aspartylate not only its cognate tRNA(Asp) but also tRNA(Asn). Reaction proceeds in two steps: L-aspartate is first activated by ATP to form Asp-AMP and then transferred to the acceptor end of tRNA(Asp/Asn). In Helicobacter pylori (strain HPAG1), this protein is Aspartate--tRNA(Asp/Asn) ligase.